The primary structure comprises 730 residues: Translation factor GUF1 homolog, mitochondrial (730 aa).

Residues 106 to 289 form the tr-type G domain; it reads ELIRNFCIIA…AVVVSIPPPK (184 aa). GTP contacts are provided by residues 115-122, 182-186, and 236-239; these read AHVDHGKS, DTPGH, and NKID.

The protein belongs to the TRAFAC class translation factor GTPase superfamily. Classic translation factor GTPase family. LepA subfamily.

Its subcellular location is the mitochondrion inner membrane. It catalyses the reaction GTP + H2O = GDP + phosphate + H(+). Promotes mitochondrial protein synthesis. May act as a fidelity factor of the translation reaction, by catalyzing a one-codon backward translocation of tRNAs on improperly translocated ribosomes. Binds to mitochondrial ribosomes in a GTP-dependent manner. The polypeptide is Translation factor GUF1 homolog, mitochondrial (Theileria annulata).